We begin with the raw amino-acid sequence, 254 residues long: Protein CbbY, plasmid (254 aa).

This sequence belongs to the HAD-like hydrolase superfamily. CbbY/CbbZ/Gph/YieH family.

This Cupriavidus necator (strain ATCC 17699 / DSM 428 / KCTC 22496 / NCIMB 10442 / H16 / Stanier 337) (Ralstonia eutropha) protein is Protein CbbY, plasmid (cbbYP).